The primary structure comprises 180 residues: NAD(P)H-quinone oxidoreductase subunit I, chloroplastic (180 aa).

2 4Fe-4S ferredoxin-type domains span residues 55–84 (GRIHFEFDKCIACEVCVRVCPIDLPLVDWR) and 95–124 (LNYSIDFGVCIFCGNCVEYCPTNCLSMTEE). Residues Cys-64, Cys-67, Cys-70, Cys-74, Cys-104, Cys-107, Cys-110, and Cys-114 each coordinate [4Fe-4S] cluster.

The protein belongs to the complex I 23 kDa subunit family. As to quaternary structure, NDH is composed of at least 16 different subunits, 5 of which are encoded in the nucleus. It depends on [4Fe-4S] cluster as a cofactor.

It localises to the plastid. It is found in the chloroplast thylakoid membrane. It catalyses the reaction a plastoquinone + NADH + (n+1) H(+)(in) = a plastoquinol + NAD(+) + n H(+)(out). The enzyme catalyses a plastoquinone + NADPH + (n+1) H(+)(in) = a plastoquinol + NADP(+) + n H(+)(out). Functionally, NDH shuttles electrons from NAD(P)H:plastoquinone, via FMN and iron-sulfur (Fe-S) centers, to quinones in the photosynthetic chain and possibly in a chloroplast respiratory chain. The immediate electron acceptor for the enzyme in this species is believed to be plastoquinone. Couples the redox reaction to proton translocation, and thus conserves the redox energy in a proton gradient. This chain is NAD(P)H-quinone oxidoreductase subunit I, chloroplastic, found in Oryza nivara (Indian wild rice).